A 270-amino-acid polypeptide reads, in one-letter code: Sec-independent protein translocase protein TatC (270 aa).

Helical transmembrane passes span 25 to 45, 75 to 95, 111 to 131, 156 to 176, 195 to 211, and 213 to 233; these read FIAVGVGFVIAYCFKERLFDI, VSLLTGVILATPVLFYEFWMF, VVILSIFFFCVGSSFGYFIVF, LGFASKMLLAFGFVFELPLVL, KYAILIFFTGAALITPP, and VVTQIMMAIPLMILYEISIIG. The interval 243-270 is disordered; it reads SDEEEAAENSDVQTDKSTDDTTPGEDQN.

This sequence belongs to the TatC family. The Tat system comprises two distinct complexes: a TatABC complex, containing multiple copies of TatA, TatB and TatC subunits, and a separate TatA complex, containing only TatA subunits. Substrates initially bind to the TatABC complex, which probably triggers association of the separate TatA complex to form the active translocon.

The protein resides in the cell inner membrane. Functionally, part of the twin-arginine translocation (Tat) system that transports large folded proteins containing a characteristic twin-arginine motif in their signal peptide across membranes. Together with TatB, TatC is part of a receptor directly interacting with Tat signal peptides. This chain is Sec-independent protein translocase protein TatC, found in Desulforapulum autotrophicum (strain ATCC 43914 / DSM 3382 / VKM B-1955 / HRM2) (Desulfobacterium autotrophicum).